The chain runs to 257 residues: MVKSHIGSWLLVLFVATWSDIGFCKKRPKPGGGWNTGGSRYPGQGSPGGNRYPPQGGGGWGQPHGGGWGQPHGGGWGQPHGGGWGQPHGGGGWGQGGGSHGQWGKPSKPKTNMKHVAGAAAAGAVVGGLGGYMLGSAMSRPLIHFGNDYEDRYYRENMYRYPNQVYYKPVDQYSNQNNLVHDCVNITVKQHTVTTTTKGENFTETDMKIMERVVEQMCVTQYQQESEAYYQRGASAILFSPPPVILLISLLILLIVG.

A signal peptide spans methionine 1–cysteine 24. The interaction with GRB2, ERI3 and SYN1 stretch occupies residues lysine 25–alanine 234. The segment at arginine 27–lysine 114 is disordered. Repeat copies occupy residues proline 54–glutamine 62, proline 63–glutamine 70, proline 71–glutamine 78, proline 79–glutamine 86, and proline 87–glutamine 95. Positions proline 54–glutamine 95 are 5 X 8 AA tandem repeats of P-H-G-G-G-W-G-Q. Gly residues predominate over residues glutamine 55–glycine 101. Positions 64, 65, 66, 72, 73, 74, 80, 81, 82, 88, 90, and 91 each coordinate Cu(2+). Cysteines 183 and 218 form a disulfide. Residues asparagine 185 and asparagine 201 are each glycosylated (N-linked (GlcNAc...) asparagine). The GPI-anchor amidated alanine moiety is linked to residue alanine 234. Positions serine 235–glycine 257 are cleaved as a propeptide — removed in mature form.

Belongs to the prion family. Monomer and homodimer. Has a tendency to aggregate into amyloid fibrils containing a cross-beta spine, formed by a steric zipper of superposed beta-strands. Soluble oligomers may represent an intermediate stage on the path to fibril formation. Copper binding may promote oligomerization. Interacts with GRB2, APP, ERI3/PRNPIP and SYN1. Mislocalized cytosolically exposed PrP interacts with MGRN1; this interaction alters MGRN1 subcellular location and causes lysosomal enlargement. Interacts with KIAA1191.

Its subcellular location is the cell membrane. The protein resides in the golgi apparatus. Its function is as follows. Its primary physiological function is unclear. Has cytoprotective activity against internal or environmental stresses. May play a role in neuronal development and synaptic plasticity. May be required for neuronal myelin sheath maintenance. May play a role in iron uptake and iron homeostasis. Soluble oligomers are toxic to cultured neuroblastoma cells and induce apoptosis (in vitro). Association with GPC1 (via its heparan sulfate chains) targets PRNP to lipid rafts. Also provides Cu(2+) or Zn(2+) for the ascorbate-mediated GPC1 deaminase degradation of its heparan sulfate side chains. This is Major prion protein (PRNP) from Mustela putorius furo (European domestic ferret).